The chain runs to 318 residues: Inner membrane protein YbhN (318 aa).

At 1–13 (MSKSHPRWRLAKK) the chain is on the periplasmic side. The chain crosses the membrane as a helical span at residues 14–34 (ILTWLFFIAVIVLLVVYAKKV). Over 35-50 (DWEEVWKVIRDYNRVA) the chain is Cytoplasmic. The helical transmembrane segment at 51–71 (LLSAVGLVVVSYLIYGCYDLL) threads the bilayer. The Periplasmic segment spans residues 72 to 85 (ARFYCGHKLAKRQV). A helical transmembrane segment spans residues 86–106 (MLVSFICYAFNLTLSTWVGGI). Residues 107-125 (GMRYRLYSRLGLPGSTITR) are Cytoplasmic-facing. The chain crosses the membrane as a helical span at residues 126–146 (IFSLSITTNWLGYILLAGIIF). Residues 147-165 (TAGVVELPDHWYVDQTTLR) are Periplasmic-facing. A helical transmembrane segment spans residues 166-186 (ILGIGLLMIIAVYLWFCAFAK). Residues 187 to 205 (HRHMTIKGQKLVLPSWKFA) lie on the Cytoplasmic side of the membrane. The helical transmembrane segment at 206–226 (LAQMLISSVNWMVMGAIIWLL) threads the bilayer. Over 227 to 233 (LGQSVNY) the chain is Periplasmic. 2 helical membrane passes run 234–254 (FFVL…HIPA) and 255–275 (GIGV…TSKG). Residues 276–277 (TI) are Periplasmic-facing. Residues 278–298 (IAALLAYRVLYYFIPLLLALI) traverse the membrane as a helical segment. Residues 299–318 (CYLLLESQAKKLRAKNEAAM) lie on the Cytoplasmic side of the membrane.

It to Synechocystis PCC 6803 slr0712.

Its subcellular location is the cell inner membrane. The polypeptide is Inner membrane protein YbhN (ybhN) (Escherichia coli (strain K12)).